The chain runs to 651 residues: Acetyl-coenzyme A synthetase 1 (651 aa).

Residues 191–194 (RGGK), Thr311, and Asn335 contribute to the CoA site. ATP-binding positions include 387–389 (GEP), 411–416 (DTWWQT), Asp500, and Arg515. Ser523 is a CoA binding site. An ATP-binding site is contributed by Arg526. Residues Val537, His539, and Val542 each contribute to the Mg(2+) site. Position 584 (Arg584) interacts with CoA. N6-acetyllysine is present on Lys609.

The protein belongs to the ATP-dependent AMP-binding enzyme family. Mg(2+) is required as a cofactor. Acetylated. Deacetylation by the SIR2-homolog deacetylase activates the enzyme.

The enzyme catalyses acetate + ATP + CoA = acetyl-CoA + AMP + diphosphate. Catalyzes the conversion of acetate into acetyl-CoA (AcCoA), an essential intermediate at the junction of anabolic and catabolic pathways. AcsA undergoes a two-step reaction. In the first half reaction, AcsA combines acetate with ATP to form acetyl-adenylate (AcAMP) intermediate. In the second half reaction, it can then transfer the acetyl group from AcAMP to the sulfhydryl group of CoA, forming the product AcCoA. In Pseudomonas aeruginosa (strain ATCC 15692 / DSM 22644 / CIP 104116 / JCM 14847 / LMG 12228 / 1C / PRS 101 / PAO1), this protein is Acetyl-coenzyme A synthetase 1.